The primary structure comprises 1008 residues: Pheromone-regulated membrane protein 10 (1008 aa).

3 disordered regions span residues 1–273, 342–384, and 477–506; these read MSQS…TFLG, KLPE…FYTP, and KNDF…TQDE. A compositionally biased stretch (low complexity) spans 70–85; it reads DTIISNASTTNNSSSD. Polar residues predominate over residues 95–111; that stretch reads GENSNLPNFNFSANQVH. Acidic residues-rich tracts occupy residues 116–132 and 143–161; these read ANED…EDTF and GSDE…EDKE. A compositionally biased stretch (basic and acidic residues) spans 162–186; that stretch reads EVVNEKEEIADDLHSKSSKTSRESK. Residues 188–204 are compositionally biased toward polar residues; sequence FNAGTKNSRRSLNSLQR. Residues 205–214 show a composition bias toward basic and acidic residues; it reads NETDVTDQLK. The segment covering 215–225 has biased composition (low complexity); it reads RTTSTTSSSKR. A compositionally biased stretch (basic and acidic residues) spans 226-239; that stretch reads SNSDKRTGFKDILR. The segment covering 346-364 has biased composition (polar residues); the sequence is GTSSDQQLDYSDTSASNLI. The span at 483-498 shows a compositional bias: basic residues; it reads GPKRMANKIPGRKHGA. The next 10 helical transmembrane spans lie at 683–703, 707–727, 736–756, 762–782, 800–820, 838–858, 866–886, 892–912, 917–937, and 978–998; these read SPWL…PFAF, WYDV…QFFV, SVFE…IGSI, FCFS…YIIL, MFYA…GASL, IKQD…LGLI, LPIM…AGKH, VTEF…NLYS, GMAV…GIAS, and VKVS…VYPF.

It belongs to the ThrE exporter (TC 2.A.79) family.

It is found in the membrane. This chain is Pheromone-regulated membrane protein 10, found in Debaryomyces hansenii (strain ATCC 36239 / CBS 767 / BCRC 21394 / JCM 1990 / NBRC 0083 / IGC 2968) (Yeast).